We begin with the raw amino-acid sequence, 952 residues long: G patch domain-containing protein 1 homolog (952 aa).

6 disordered regions span residues 104 to 127 (QGIR…QRRR), 165 to 233 (GWKP…DDYE), 320 to 345 (DKKP…EDNS), 370 to 432 (RSRF…KDHS), 660 to 711 (PEKV…RNKP), and 822 to 952 (VAPE…KSKH). The segment covering 107-123 (RTRDEFANEDEQKQRSD) has biased composition (basic and acidic residues). Residues 153–199 (RDKVAVRILKSMGWKPGQGVGPRQTRKEKRQATARNSKEQYLMEHYG) enclose the G-patch domain. Residues 214-233 (DSNNEDEDDEDITFAPDDYE) are compositionally biased toward acidic residues. Positions 323–333 (PKQKKQQHVQQ) are enriched in basic residues. 3 stretches are compositionally biased toward basic and acidic residues: residues 375-402 (PMDK…DLNP), 414-432 (QEEK…KDHS), and 679-691 (IQDK…EPSK). Residues 886–896 (ASSSNESSSSD) are compositionally biased toward low complexity. Composition is skewed to basic residues over residues 906 to 934 (KLSK…KKSK) and 941 to 952 (HKAKKKKKKSKH).

Belongs to the GPATCH1 family.

The polypeptide is G patch domain-containing protein 1 homolog (Drosophila melanogaster (Fruit fly)).